The sequence spans 156 residues: Small ribosomal subunit protein uS7 (156 aa).

It belongs to the universal ribosomal protein uS7 family. In terms of assembly, part of the 30S ribosomal subunit. Contacts proteins S9 and S11.

Functionally, one of the primary rRNA binding proteins, it binds directly to 16S rRNA where it nucleates assembly of the head domain of the 30S subunit. Is located at the subunit interface close to the decoding center, probably blocks exit of the E-site tRNA. The protein is Small ribosomal subunit protein uS7 of Bradyrhizobium sp. (strain BTAi1 / ATCC BAA-1182).